The sequence spans 250 residues: Small ribosomal subunit protein uS3 (250 aa).

Residues 39–111 (IRTLIKNNYP…KVQINIFEVK (73 aa)) enclose the KH type-2 domain.

It belongs to the universal ribosomal protein uS3 family. Part of the 30S ribosomal subunit. Forms a tight complex with proteins S10 and S14.

In terms of biological role, binds the lower part of the 30S subunit head. Binds mRNA in the 70S ribosome, positioning it for translation. The polypeptide is Small ribosomal subunit protein uS3 (Alder yellows phytoplasma).